Consider the following 683-residue polypeptide: Pre-mRNA-splicing factor CLF1 (683 aa).

HAT repeat units follow at residues 40-72, 74-106, 108-140, 142-173, 175-206, 291-323, 336-367, 374-407, 409-440, 442-474, 476-513, 515-547, and 582-620; these read DWQRRKRSEFEEALKRNRLDVRQWLRYAAFEYE, RDMRRARSVFERALAVAPGDVVVWLRYVDCELR, RDVNHARNLLVRATALLPRVDKLWYKYVLMEES, GQVELVRGVYTKWCTLEPAAAAWDAFVDFETR, GQVEHVREVYSRYVMVHPVAATWLKWVAFERK, SILFKRKREYEEQLLAHPLDYDAWWLYLDLLEE, ATVKAVPRSQEKDMQWRKYVNLWLRYLLFLET, LTRSMYQKLVREVIPNTKFTFAKAWIMYAEFEIR, EKLDKARKILGMSLGMCPKPKLFQYYIDLEIK, KEFDRVRRLHEKLLEFQPDVLSNWIEYAELEEN, GDEDRARGIYEIGLTADGGLSQARQLQLMQRYIQFETD, SEFERARALYSRYVALSGYDPNVWISCALYESS, and ENKEQTRAIFEKALRHYTSEKDDEGRILVLQAYKDYESI.

The protein belongs to the crooked-neck family. As to quaternary structure, associated with the spliceosome.

The protein resides in the nucleus. Involved in pre-mRNA splicing and cell cycle progression. Required for the spliceosome assembly and initiation of the DNA replication. The protein is Pre-mRNA-splicing factor CLF1 (CLF1) of Eremothecium gossypii (strain ATCC 10895 / CBS 109.51 / FGSC 9923 / NRRL Y-1056) (Yeast).